Consider the following 133-residue polypeptide: uncharacterized protein (133 aa).

Transmembrane regions (helical) follow at residues 13-33 and 73-93; these read FLLS…LFLS and FGNP…LLLL.

It localises to the membrane. This is an uncharacterized protein from Saccharomyces cerevisiae (strain ATCC 204508 / S288c) (Baker's yeast).